Consider the following 202-residue polypeptide: LexA repressor (202 aa).

Residues 28–48 (RAEIAQRLGFRSPNAAEEHLK) constitute a DNA-binding region (H-T-H motif). Active-site for autocatalytic cleavage activity residues include serine 119 and lysine 156.

It belongs to the peptidase S24 family. In terms of assembly, homodimer.

It catalyses the reaction Hydrolysis of Ala-|-Gly bond in repressor LexA.. Functionally, represses a number of genes involved in the response to DNA damage (SOS response), including recA and lexA. Binds to the 16 bp palindromic sequence 5'-CTGTATATATATACAG-3'. In the presence of single-stranded DNA, RecA interacts with LexA causing an autocatalytic cleavage which disrupts the DNA-binding part of LexA, leading to derepression of the SOS regulon and eventually DNA repair. The protein is LexA repressor of Yersinia enterocolitica serotype O:8 / biotype 1B (strain NCTC 13174 / 8081).